A 92-amino-acid chain; its full sequence is Small ribosomal subunit protein uS19 (92 aa).

This sequence belongs to the universal ribosomal protein uS19 family.

Its function is as follows. Protein S19 forms a complex with S13 that binds strongly to the 16S ribosomal RNA. In Borrelia hermsii (strain HS1 / DAH), this protein is Small ribosomal subunit protein uS19.